Reading from the N-terminus, the 235-residue chain is MSSADGALVLFSGGQDSTTCVAWALKRYAKVETIGFDYGQRHAVELEVRPDVLRSLRDINPEWNKKLGEDHMIDLSLISKISNTAMTQDVEITMMENGLPNTFVPGRNLLFMTVAATVAYRRGLDVLVGGMCETDFSGYPDCRDDTMKALQVALNLGMATRLKLETPLMWIDKAETWKMAQDLGGKPLVDLIRAGTHTCYLGERGALHDWGYGCGTCPACELRARGYANFAAQEK.

ATP is bound at residue 11–21; the sequence is FSGGQDSTTCV. Positions 199, 214, 217, and 220 each coordinate Zn(2+).

It belongs to the QueC family. Zn(2+) is required as a cofactor.

It catalyses the reaction 7-carboxy-7-deazaguanine + NH4(+) + ATP = 7-cyano-7-deazaguanine + ADP + phosphate + H2O + H(+). The protein operates within purine metabolism; 7-cyano-7-deazaguanine biosynthesis. Functionally, catalyzes the ATP-dependent conversion of 7-carboxy-7-deazaguanine (CDG) to 7-cyano-7-deazaguanine (preQ(0)). The polypeptide is 7-cyano-7-deazaguanine synthase (Janthinobacterium sp. (strain Marseille) (Minibacterium massiliensis)).